The primary structure comprises 1483 residues: Cystic fibrosis transmembrane conductance regulator (1483 aa).

At 1-77 (MQRSPLEKAS…KLINALRRCF (77 aa)) the chain is on the cytoplasmic side. The helical transmembrane segment at 78–98 (FWKFMFYGILLYLGEVTKAVQ) threads the bilayer. The ABC transmembrane type-1 1 domain occupies 81-365 (FMFYGILLYL…WAVQTWYDSL (285 aa)). The Extracellular portion of the chain corresponds to 99–122 (PLLLGRIIASYDPDNKVERSIAIY). Residues 123–146 (LGIGLCLLFVVRTLLLHPAIFGLH) form a helical membrane-spanning segment. The Cytoplasmic segment spans residues 147-195 (HIGMQMRIAMFSLIYKKTLKLSSRVLDKISIGQLISLLSNNLNKFDEGL). Residues 196–216 (ALAHFVWIVPLQVTLLMGLLW) traverse the membrane as a helical segment. The Extracellular segment spans residues 217–222 (ELLQAS). A helical transmembrane segment spans residues 223–243 (AFCGLAFLIIVAFYQAGLGRM). The Cytoplasmic segment spans residues 244-298 (MMKYRDKRGGKINERLVITSEMIENIQSVKAYCWEEAMEKMIENLRQTELKLTRK). A helical transmembrane segment spans residues 299–319 (AAYVRYCNSSAFFFSGFFVVF). The Extracellular segment spans residues 320–339 (LSVLPYALMKGIILRKIFTT). A helical transmembrane segment spans residues 340–358 (ISFCIVLRMAVTRQFPWAV). The Cytoplasmic portion of the chain corresponds to 359 to 859 (QTWYDSLGAI…YLRYITIHKS (501 aa)). ATP-binding positions include Trp-401, Ser-434, 458-465 (GSTGAGKT), and Gln-493. The 224-residue stretch at 423 to 646 (NGDNSLFFSN…RPDFSSKLMG (224 aa)) folds into the ABC transporter 1 domain. The S-palmitoyl cysteine moiety is linked to residue Cys-524. 2 positions are modified to phosphoserine: Ser-549 and Ser-660. The disordered R region stretch occupies residues 654 to 832 (SAERRNSILT…EEINEEDLKE (179 aa)). Position 670 is a phosphoserine; by PKA (Ser-670). Ser-686 is modified (phosphoserine). A Glycyl lysine isopeptide (Lys-Gly) (interchain with G-Cter in ubiquitin) cross-link involves residue Lys-688. 2 positions are modified to phosphoserine: Ser-700 and Ser-712. Phosphothreonine is present on Thr-717. Phosphoserine occurs at positions 737, 768, 791, 796, and 814. The chain crosses the membrane as a helical span at residues 860–880 (LIFVLIWCLIIFLAEVAVSLV). Residues 860 to 1157 (LIFVLIWCLI…AVNSSIDVDS (298 aa)) enclose the ABC transmembrane type-1 2 domain. The Extracellular portion of the chain corresponds to 881–920 (FLLLFEKSPRQDTGNVTKSSNNSSYGVIITNTSSYYIIYI). Asn-895, Asn-901, Asn-902, and Asn-911 each carry an N-linked (GlcNAc...) asparagine glycan. The discontinuously helical transmembrane segment at 921-941 (YVGVADTLLALGLLRGLPLVH) threads the bilayer. Topologically, residues 942–992 (TLITASKILHHKMLHSVLQAPMSTLNTLKAGGILNRFSKDIAILDDLLPLT) are cytoplasmic. A helical transmembrane segment spans residues 993 to 1013 (IFDFIQLILIVIGAVIVVSVL). The Extracellular portion of the chain corresponds to 1014-1015 (EP). A helical membrane pass occupies residues 1016–1036 (YIFLATVPVIIAFVMLRAYFL). The Cytoplasmic portion of the chain corresponds to 1037-1097 (HTSQQLKQLE…TANWFLYLST (61 aa)). Residues 1098–1118 (LRWFQMRIEMIFVIFFIAVTF) traverse the membrane as a helical segment. Topologically, residues 1119-1132 (ISILTTGDGEGRVG) are extracellular. Residues 1133–1153 (IILTLAMNIMNTLQWAVNSSI) traverse the membrane as a helical segment. At 1154-1483 (DVDSLMRSVS…TEEEVQETRL (330 aa)) the chain is on the cytoplasmic side. The 234-residue stretch at 1213–1446 (MTVKDLTAKY…KSLFRQAISN (234 aa)) folds into the ABC transporter 2 domain. Residues Tyr-1222 and 1247–1254 (GRTGSGKS) contribute to the ATP site. The interaction with GORASP2 stretch occupies residues 1389-1483 (RTIKQAFADC…TEEEVQETRL (95 aa)). Residue Cys-1398 is the site of S-palmitoyl cysteine attachment. Ser-1447 and Ser-1459 each carry phosphoserine. Over residues 1455-1465 (HRNSSKHKSRS) the composition is skewed to basic residues. A disordered region spans residues 1455 to 1483 (HRNSSKHKSRSKIAALKEETEEEVQETRL). Acidic residues predominate over residues 1473 to 1483 (ETEEEVQETRL). Positions 1481–1483 (TRL) match the PDZ-binding motif.

It belongs to the ABC transporter superfamily. ABCC family. CFTR transporter (TC 3.A.1.202) subfamily. Monomer; does not require oligomerization for channel activity. May form oligomers in the membrane. Interacts with SLC26A3, SLC26A6 and NHERF1. Interacts with SHANK2. Interacts with MYO6. Interacts (via C-terminus) with GOPC (via PDZ domain); this promotes CFTR internalization and thereby decreases channel activity. Interacts with SLC4A7 through NHERF1. Found in a complex with MYO5B and RAB11A. Interacts with ANO1. Interacts with SLC26A8. Interacts with AHCYL1; the interaction increases CFTR activity. Interacts with CSE1L. The core-glycosylated form interacts with GORASP2 (via PDZ GRASP-type 1 domain) in respone to ER stress. Interacts with MARCHF2; the interaction leads to CFTR ubiqtuitination and degradation. Interacts with ADGRG2. Post-translationally, N-glycosylated. Phosphorylated; cAMP treatment promotes phosphorylation and activates the channel. Dephosphorylation decreases the ATPase activity (in vitro). Phosphorylation at PKA sites activates the channel. Phosphorylation at PKC sites enhances the response to phosphorylation by PKA. Phosphorylated by AMPK; this inhibits channel activity. In terms of processing, ubiquitinated, leading to its degradation in the lysosome. Deubiquitination by USP10 in early endosomes enhances its endocytic recycling to the cell membrane. Ubiquitinated by RNF185 during ER stress. Ubiquitinated by MARCHF2.

The protein resides in the apical cell membrane. It is found in the early endosome membrane. The protein localises to the cell membrane. It localises to the recycling endosome membrane. Its subcellular location is the endoplasmic reticulum membrane. The protein resides in the nucleus. The catalysed reaction is ATP + H2O + closed Cl(-) channel = ADP + phosphate + open Cl(-) channel.. The enzyme catalyses chloride(in) = chloride(out). It carries out the reaction hydrogencarbonate(in) = hydrogencarbonate(out). It catalyses the reaction ATP + H2O = ADP + phosphate + H(+). Functionally, epithelial ion channel that plays an important role in the regulation of epithelial ion and water transport and fluid homeostasis. Mediates the transport of chloride ions across the cell membrane. The ion channel is also permeable to HCO(3)(-); selectivity depends on the extracellular chloride concentration. Exerts its function also by modulating the activity of other ion channels and transporters. Contributes to the regulation of the pH and the ion content of the epithelial fluid layer. Modulates the activity of the epithelial sodium channel (ENaC) complex, in part by regulating the cell surface expression of the ENaC complex. May regulate bicarbonate secretion and salvage in epithelial cells by regulating the transporter SLC4A7. Can inhibit the chloride channel activity of ANO1. Plays a role in the chloride and bicarbonate homeostasis during sperm epididymal maturation and capacitation. The polypeptide is Cystic fibrosis transmembrane conductance regulator (Atelerix albiventris (Middle-African hedgehog)).